We begin with the raw amino-acid sequence, 121 residues long: Small ribosomal subunit protein uS13 (121 aa).

The tract at residues 99–121 (GQRTRTNARTRRGARKTVAGKKK) is disordered. The segment covering 100–121 (QRTRTNARTRRGARKTVAGKKK) has biased composition (basic residues).

Belongs to the universal ribosomal protein uS13 family. Part of the 30S ribosomal subunit. Forms a loose heterodimer with protein S19. Forms two bridges to the 50S subunit in the 70S ribosome.

Its function is as follows. Located at the top of the head of the 30S subunit, it contacts several helices of the 16S rRNA. In the 70S ribosome it contacts the 23S rRNA (bridge B1a) and protein L5 of the 50S subunit (bridge B1b), connecting the 2 subunits; these bridges are implicated in subunit movement. Contacts the tRNAs in the A and P-sites. This chain is Small ribosomal subunit protein uS13, found in Synechococcus sp. (strain RCC307).